Here is a 412-residue protein sequence, read N- to C-terminus: Major facilitator superfamily domain-containing protein 3 (412 aa).

12 consecutive transmembrane segments (helical) span residues G10 to L30, V40 to V60, S73 to G93, Q94 to M114, V138 to L158, L166 to A186, V209 to E229, L250 to G270, L291 to M311, A321 to T341, L361 to A381, and L384 to L404.

Belongs to the major facilitator superfamily.

Its subcellular location is the membrane. This chain is Major facilitator superfamily domain-containing protein 3 (MFSD3), found in Homo sapiens (Human).